The primary structure comprises 314 residues: Inactive protein FRIGIDA (314 aa).

Over residues 1–18 (MSNYPPTVAAQPTTTANP) the composition is skewed to low complexity. The disordered stretch occupies residues 1–31 (MSNYPPTVAAQPTTTANPLLQRHQSEQRRRE). A coiled-coil region spans residues 67 to 97 (VAVETFKRQFDDLQKHIESIENAIDSKLESN).

This sequence belongs to the Frigida family.

The protein resides in the nucleus. The polypeptide is Inactive protein FRIGIDA (FRI) (Arabidopsis thaliana (Mouse-ear cress)).